Reading from the N-terminus, the 536-residue chain is 2-isopropylmalate synthase (536 aa).

A Pyruvate carboxyltransferase domain is found at 8–273 (VLIFDTTLRD…FFGKDSESPT (266 aa)). Positions 17, 208, 210, and 244 each coordinate Mn(2+). Residues 408-536 (KLHLVQVSCG…PQHDVVKANL (129 aa)) form a regulatory domain region.

This sequence belongs to the alpha-IPM synthase/homocitrate synthase family. LeuA type 1 subfamily. Homodimer. Mn(2+) serves as cofactor.

It localises to the cytoplasm. It carries out the reaction 3-methyl-2-oxobutanoate + acetyl-CoA + H2O = (2S)-2-isopropylmalate + CoA + H(+). It functions in the pathway amino-acid biosynthesis; L-leucine biosynthesis; L-leucine from 3-methyl-2-oxobutanoate: step 1/4. Functionally, catalyzes the condensation of the acetyl group of acetyl-CoA with 3-methyl-2-oxobutanoate (2-ketoisovalerate) to form 3-carboxy-3-hydroxy-4-methylpentanoate (2-isopropylmalate). This Prochlorococcus marinus (strain SARG / CCMP1375 / SS120) protein is 2-isopropylmalate synthase.